Reading from the N-terminus, the 121-residue chain is Large ribosomal subunit protein bL12 (121 aa).

Belongs to the bacterial ribosomal protein bL12 family. In terms of assembly, homodimer. Part of the ribosomal stalk of the 50S ribosomal subunit. Forms a multimeric L10(L12)X complex, where L10 forms an elongated spine to which 2 to 4 L12 dimers bind in a sequential fashion. Binds GTP-bound translation factors.

Forms part of the ribosomal stalk which helps the ribosome interact with GTP-bound translation factors. Is thus essential for accurate translation. This Pseudomonas savastanoi pv. phaseolicola (strain 1448A / Race 6) (Pseudomonas syringae pv. phaseolicola (strain 1448A / Race 6)) protein is Large ribosomal subunit protein bL12.